The primary structure comprises 773 residues: Leucine-rich repeat-containing protein let-4 (773 aa).

The first 20 residues, 1–20 (MRLLLCLLLFSTLLINSTNA), serve as a signal peptide directing secretion. At 21-689 (CPGVITQACF…RLEKSFFTTT (669 aa)) the chain is on the extracellular side. LRR repeat units lie at residues 61-84 (VGLI…FFSG), 85-107 (LFIR…AFAG), 109-132 (NPVL…ALAG), 133-157 (LPNL…IFPN), 159-181 (NKLY…TFQN), 183-206 (KNSI…AIRG), 207-230 (LKQL…NFLN), 231-254 (LPVL…AFLN), 256-278 (PSLR…QFQT), 279-302 (FEQL…SLSG), 303-326 (LKQL…AFTN), 328-349 (SIVV…IISG), 350-373 (LPNL…AFYD), 375-397 (ASLV…TFLA), 399-421 (LNLL…AFNS), and 486-516 (LVQI…AFQQ). The chain crosses the membrane as a helical span at residues 690–710 (IIFICVGTAVIVLVVVIAGLC). At 711-773 (ISKHRQLQFE…PGSSYCNYYK (63 aa)) the chain is on the cytoplasmic side.

As to expression, in L1 larvae, expressed in a subset of epithelial cells including epidermal, vulval and rectal cells and the excretory duct and pore. Absent from internal epithelia such as the gut and pharyngeal tubes. Transiently expressed in the excretory canal cell at the 1.5-fold embryonic stage but no longer visible in this cell at hatching.

It localises to the apical cell membrane. In terms of biological role, required for apical extracellular matrix organization and epithelial junction maintenance. This Caenorhabditis elegans protein is Leucine-rich repeat-containing protein let-4 (let-4).